The sequence spans 362 residues: Peptide chain release factor 1 (362 aa).

At glutamine 237 the chain carries N5-methylglutamine.

It belongs to the prokaryotic/mitochondrial release factor family. Methylated by PrmC. Methylation increases the termination efficiency of RF1.

It is found in the cytoplasm. Functionally, peptide chain release factor 1 directs the termination of translation in response to the peptide chain termination codons UAG and UAA. This is Peptide chain release factor 1 from Aliivibrio fischeri (strain ATCC 700601 / ES114) (Vibrio fischeri).